A 218-amino-acid polypeptide reads, in one-letter code: tRNA (guanine-N(7)-)-methyltransferase (218 aa).

Residues E46, E71, D98, and D120 each coordinate S-adenosyl-L-methionine. D120 is a catalytic residue. Substrate is bound at residue K124. Residues 126-131 (RHEKRR) form an interaction with RNA region. Substrate is bound by residues D156 and 196–199 (TEYE).

The protein belongs to the class I-like SAM-binding methyltransferase superfamily. TrmB family.

It carries out the reaction guanosine(46) in tRNA + S-adenosyl-L-methionine = N(7)-methylguanosine(46) in tRNA + S-adenosyl-L-homocysteine. Its pathway is tRNA modification; N(7)-methylguanine-tRNA biosynthesis. In terms of biological role, catalyzes the formation of N(7)-methylguanine at position 46 (m7G46) in tRNA. The protein is tRNA (guanine-N(7)-)-methyltransferase of Lactobacillus johnsonii (strain CNCM I-12250 / La1 / NCC 533).